Consider the following 116-residue polypeptide: Tachykinin-3 (116 aa).

An N-terminal signal peptide occupies residues 1 to 20 (MRSAMLFAAVLALSLAWTFG). Residues 21 to 79 (AVCEEPQGQGGRLSKDSDLYQLPPSLLRRLYDSRPVSLEGLLKVLSKASVGPKETSLPQ) constitute a propeptide that is removed on maturation. A Methionine amide modification is found at Met-91. Positions 93–116 (KRNSQPDTPTDVVEENTPSFGILK) are disordered. Residues 95–116 (NSQPDTPTDVVEENTPSFGILK) constitute a propeptide that is removed on maturation.

Belongs to the tachykinin family.

It localises to the secreted. In terms of biological role, tachykinins are active peptides which excite neurons, evoke behavioral responses, are potent vasodilators and secretagogues, and contract (directly or indirectly) many smooth muscles. Is a critical central regulator of gonadal function. This chain is Tachykinin-3 (Tac3), found in Mus musculus (Mouse).